The sequence spans 495 residues: Lysine--tRNA ligase (495 aa).

Mg(2+)-binding residues include glutamate 406 and glutamate 413.

This sequence belongs to the class-II aminoacyl-tRNA synthetase family. Homodimer. Requires Mg(2+) as cofactor.

It localises to the cytoplasm. The catalysed reaction is tRNA(Lys) + L-lysine + ATP = L-lysyl-tRNA(Lys) + AMP + diphosphate. This Staphylococcus saprophyticus subsp. saprophyticus (strain ATCC 15305 / DSM 20229 / NCIMB 8711 / NCTC 7292 / S-41) protein is Lysine--tRNA ligase.